The sequence spans 134 residues: Protein NrdI (134 aa).

The protein belongs to the NrdI family.

Functionally, probably involved in ribonucleotide reductase function. This Rhizobium etli (strain CIAT 652) protein is Protein NrdI.